The chain runs to 223 residues: Transmembrane protein 126 (223 aa).

Residues 1–39 (MALSRAKPDELPRDAVVITEDQALKYQWKIITSWDKIGE) lie on the Mitochondrial matrix side of the membrane. The helical transmembrane segment at 40–62 (VWSLRYTPGILSALAAGTGAYIN) threads the bilayer. Residues 63 to 78 (NHYRTKLRLGGHGRLS) are Mitochondrial intermembrane-facing. Residues 79 to 99 (TYLPIVAVPAIFTMLAHKFFI) form a helical membrane-spanning segment. Topologically, residues 100 to 123 (QRPILLNPLGECPVCIQMRSAAFQ) are mitochondrial matrix. A helical transmembrane segment spans residues 124 to 144 (TSLGIVYPTILAPFAAFLFAT). At 145 to 171 (RCYTYRIPSITENPREVFLLWRKFTRP) the chain is on the mitochondrial intermembrane side. A helical membrane pass occupies residues 172–192 (IVPALGTLIGLQALLTMFLTG). At 193–223 (QEDKQNFKLMLRMREIEHQVEEEHLPQRMDF) the chain is on the mitochondrial matrix side.

The protein belongs to the TMEM126 family. In terms of assembly, associates with mitochondrial complex I assembly intermediates during its biogenesis.

It localises to the mitochondrion membrane. Its function is as follows. As part of the MCIA complex, involved in the assembly of the mitochondrial complex I. This is Transmembrane protein 126 from Drosophila melanogaster (Fruit fly).